The following is a 624-amino-acid chain: Probable potassium transport system protein Kup 1 (624 aa).

12 helical membrane passes run Leu-10–Leu-30, Leu-48–Phe-68, Pro-94–Thr-114, Leu-133–Ala-153, Ile-159–Ile-179, Phe-210–Gly-230, Phe-242–Val-262, Pro-270–Ala-290, Ile-331–Phe-351, Ile-363–Ile-383, Thr-388–Ala-408, and Phe-413–Ser-433.

The protein belongs to the HAK/KUP transporter (TC 2.A.72) family.

It localises to the cell inner membrane. It catalyses the reaction K(+)(in) + H(+)(in) = K(+)(out) + H(+)(out). Functionally, transport of potassium into the cell. Likely operates as a K(+):H(+) symporter. The chain is Probable potassium transport system protein Kup 1 from Legionella pneumophila subsp. pneumophila (strain Philadelphia 1 / ATCC 33152 / DSM 7513).